Reading from the N-terminus, the 265-residue chain is Inositol-1-monophosphatase (265 aa).

Glu69, Asp87, Ile89, and Asp90 together coordinate Mg(2+). Position 69 (Glu69) interacts with substrate. Substrate-binding positions include 89 to 92 (IDGT), Arg185, and Asp214. Asp214 contributes to the Mg(2+) binding site.

It belongs to the inositol monophosphatase superfamily. Mg(2+) serves as cofactor.

It carries out the reaction a myo-inositol phosphate + H2O = myo-inositol + phosphate. The catalysed reaction is a ribonucleoside 5'-phosphate + H2O = a ribonucleoside + phosphate. Its function is as follows. Hydrolyzes myo-inositol monophosphate. Catalyzes the dephosphorylation of GMP and IMP. The polypeptide is Inositol-1-monophosphatase (Bacillus subtilis (strain 168)).